The chain runs to 460 residues: MALSAAIVLAAGEGTRMRSNKPKVLHTFAGKTFLNRVMDSVAALNPDTLAVVVHFQAERVAEAARSYDEQVTIVNQDDIPGTGRAVQCAMAQLTESGKIDGPVLIAASDMPLLDSETLHRLVEFHTASGNGATVLTTILDDPTGYGRIIRDREGNVLRIVEQKDANRSELAVQEVNTSVYVFEASVLAEAIAGLKSNNAQGEFYLTDALETAKSAGKVGAFAAPDPLTVEGVNDRVQLAALSKTYNRRVCERWMRNGVTILDPETTWIEDDVRIGRDATILPGSFLQGHTVIGEDAVVGPYTTLIDATVDEGAVVERSRVQESHIGARTNIGPWTYLRVGNEFGEDAKAGAFVEMKKTHIGNGTKVPHLSYVGDARLGDHTNIGGGTITANYDGVHKNRTVIGDGCHVGAGNLFVAPVEVGDNVTTGAGSVVRHAVPDDTMVYSENTQHNVEGWKPAWER.

Residues 1–235 form a pyrophosphorylase region; it reads MALSAAIVLA…PLTVEGVNDR (235 aa). Residues 9–12, K23, Q76, and 81–82 contribute to the UDP-N-acetyl-alpha-D-glucosamine site; these read LAAG and GT. Mg(2+) is bound at residue D109. Residues G146, E161, N176, and N233 each contribute to the UDP-N-acetyl-alpha-D-glucosamine site. A Mg(2+)-binding site is contributed by N233. The tract at residues 236-256 is linker; that stretch reads VQLAALSKTYNRRVCERWMRN. An N-acetyltransferase region spans residues 257-460; that stretch reads GVTILDPETT…VEGWKPAWER (204 aa). 2 residues coordinate UDP-N-acetyl-alpha-D-glucosamine: R338 and K356. The Proton acceptor role is filled by H368. 2 residues coordinate UDP-N-acetyl-alpha-D-glucosamine: Y371 and N382. Residues 391-392 and A428 each bind acetyl-CoA; that span reads NY.

It in the N-terminal section; belongs to the N-acetylglucosamine-1-phosphate uridyltransferase family. The protein in the C-terminal section; belongs to the transferase hexapeptide repeat family. In terms of assembly, homotrimer. Requires Mg(2+) as cofactor.

The protein resides in the cytoplasm. It carries out the reaction alpha-D-glucosamine 1-phosphate + acetyl-CoA = N-acetyl-alpha-D-glucosamine 1-phosphate + CoA + H(+). It catalyses the reaction N-acetyl-alpha-D-glucosamine 1-phosphate + UTP + H(+) = UDP-N-acetyl-alpha-D-glucosamine + diphosphate. It functions in the pathway nucleotide-sugar biosynthesis; UDP-N-acetyl-alpha-D-glucosamine biosynthesis; N-acetyl-alpha-D-glucosamine 1-phosphate from alpha-D-glucosamine 6-phosphate (route II): step 2/2. It participates in nucleotide-sugar biosynthesis; UDP-N-acetyl-alpha-D-glucosamine biosynthesis; UDP-N-acetyl-alpha-D-glucosamine from N-acetyl-alpha-D-glucosamine 1-phosphate: step 1/1. Its pathway is bacterial outer membrane biogenesis; LPS lipid A biosynthesis. Functionally, catalyzes the last two sequential reactions in the de novo biosynthetic pathway for UDP-N-acetylglucosamine (UDP-GlcNAc). The C-terminal domain catalyzes the transfer of acetyl group from acetyl coenzyme A to glucosamine-1-phosphate (GlcN-1-P) to produce N-acetylglucosamine-1-phosphate (GlcNAc-1-P), which is converted into UDP-GlcNAc by the transfer of uridine 5-monophosphate (from uridine 5-triphosphate), a reaction catalyzed by the N-terminal domain. The polypeptide is Bifunctional protein GlmU (Bifidobacterium longum subsp. infantis (strain ATCC 15697 / DSM 20088 / JCM 1222 / NCTC 11817 / S12)).